The following is a 197-amino-acid chain: MTLDIVNWKAIIEALLYAAGDEGLTKKQLMSVLEVEEVALLDMMSAVKEEYQKQERGIELIEYADSYMLLTKKEYSIYLKKLVETPSKGLSQAALEVLAIVSYKQPITRSEVEEIRGVKSERVLHSLVAKALLCEVGRADGPGRAILYGTTPTFLEQFGLKALDELPPLPENVEADGVQEEADLFFENFNQTFEEIK.

This sequence belongs to the ScpB family. Homodimer. Homodimerization may be required to stabilize the binding of ScpA to the Smc head domains. Component of a cohesin-like complex composed of ScpA, ScpB and the Smc homodimer, in which ScpA and ScpB bind to the head domain of Smc. The presence of the three proteins is required for the association of the complex with DNA.

It localises to the cytoplasm. Functionally, participates in chromosomal partition during cell division. May act via the formation of a condensin-like complex containing Smc and ScpA that pull DNA away from mid-cell into both cell halves. The polypeptide is Segregation and condensation protein B (Bacillus pumilus (strain SAFR-032)).